Consider the following 444-residue polypeptide: Tol-Pal system protein TolB (444 aa).

Residues 1 to 26 (MNLFRSLAPMGLALALLLPAAAPALA) form the signal peptide. Residues 287-310 (ASGTRRQLTNSPSIETAPSYSPDG) are compositionally biased toward polar residues. The interval 287-311 (ASGTRRQLTNSPSIETAPSYSPDGS) is disordered.

The protein belongs to the TolB family. In terms of assembly, the Tol-Pal system is composed of five core proteins: the inner membrane proteins TolA, TolQ and TolR, the periplasmic protein TolB and the outer membrane protein Pal. They form a network linking the inner and outer membranes and the peptidoglycan layer.

It is found in the periplasm. Functionally, part of the Tol-Pal system, which plays a role in outer membrane invagination during cell division and is important for maintaining outer membrane integrity. The protein is Tol-Pal system protein TolB of Cereibacter sphaeroides (strain ATCC 17025 / ATH 2.4.3) (Rhodobacter sphaeroides).